A 548-amino-acid chain; its full sequence is Thermosome subunit alpha (548 aa).

The tract at residues 527-548 (TKPEGGQGGGMPGGMGGMDMGM) is disordered. Positions 531–548 (GGQGGGMPGGMGGMDMGM) are enriched in gly residues.

The protein belongs to the TCP-1 chaperonin family. In terms of assembly, forms a Heterooligomeric complex of two stacked eight-membered rings.

Its function is as follows. Molecular chaperone; binds unfolded polypeptides in vitro, and has a weak ATPase activity. The polypeptide is Thermosome subunit alpha (thsA) (Thermococcus sp. (strain JCM 11816 / KS-1)).